A 452-amino-acid polypeptide reads, in one-letter code: Gastrin/cholecystokinin type B receptor (452 aa).

Topologically, residues Met1–Thr57 are extracellular. 3 N-linked (GlcNAc...) asparagine glycosylation sites follow: Asn7, Asn28, and Asn34. The helical transmembrane segment at Leu58–Gly78 threads the bilayer. Topologically, residues Leu79–Leu99 are cytoplasmic. A helical transmembrane segment spans residues Leu100 to Phe120. Residues Gly121 to Ala127 lie on the Extracellular side of the membrane. Cysteines 125 and 203 form a disulfide. The helical transmembrane segment at Val128–Leu148 threads the bilayer. The Cytoplasmic segment spans residues Glu149–Arg171. Residues Val172–Ala192 form a helical membrane-spanning segment. Topologically, residues Val193–Val218 are extracellular. Residues Leu219–Ile239 form a helical membrane-spanning segment. Topologically, residues Ser240–Met339 are cytoplasmic. A disordered region spans residues Glu256–Glu285. Residues Ser263–Gln273 show a composition bias toward gly residues. The chain crosses the membrane as a helical span at residues Leu340–Trp360. At Arg361 to Pro376 the chain is on the extracellular side. A helical membrane pass occupies residues Ile377–Phe397. Residues Met398–Gly452 lie on the Cytoplasmic side of the membrane. Cys413 carries S-palmitoyl cysteine lipidation.

The protein belongs to the G-protein coupled receptor 1 family.

The protein localises to the cell membrane. Functionally, receptor for gastrin and cholecystokinin. The CCK-B receptors occur throughout the central nervous system where they modulate anxiety, analgesia, arousal, and neuroleptic activity. This receptor mediates its action by association with G proteins that activate a phosphatidylinositol-calcium second messenger system. In Sus scrofa (Pig), this protein is Gastrin/cholecystokinin type B receptor.